The following is a 455-amino-acid chain: ATP-dependent protease ATPase subunit HslU (455 aa).

Residues Val23, Gly65–Glu70, Asp266, Glu333, and Arg405 each bind ATP.

Belongs to the ClpX chaperone family. HslU subfamily. As to quaternary structure, a double ring-shaped homohexamer of HslV is capped on each side by a ring-shaped HslU homohexamer. The assembly of the HslU/HslV complex is dependent on binding of ATP.

It is found in the cytoplasm. In terms of biological role, ATPase subunit of a proteasome-like degradation complex; this subunit has chaperone activity. The binding of ATP and its subsequent hydrolysis by HslU are essential for unfolding of protein substrates subsequently hydrolyzed by HslV. HslU recognizes the N-terminal part of its protein substrates and unfolds these before they are guided to HslV for hydrolysis. The sequence is that of ATP-dependent protease ATPase subunit HslU from Xanthomonas oryzae pv. oryzae (strain MAFF 311018).